The sequence spans 118 residues: UPF0102 protein NE0719 (118 aa).

It belongs to the UPF0102 family.

The protein is UPF0102 protein NE0719 of Nitrosomonas europaea (strain ATCC 19718 / CIP 103999 / KCTC 2705 / NBRC 14298).